The following is a 775-amino-acid chain: MAADDKVAILTDDEEEQKRKYVLADPFNGICREPEPPSNETPSSTETSAIPEEEIDWIEKHCVKVNNDLLISKVFYFFFYSAYGSLYPLLPVYYKQLGMSPSQSGLLVGIRYFIEFCSAPFWGVVADRFRKGKIVLLFSLLCWVLFNLGIGFVKPATLRCLPKIPPTAHPTNVSHPVTVLPMNSSTVAFFSTPPKLLQKRDVQLSETEPNISDIDLVSTALTLTSEPTRRPQTEAITHPVTGLILNTSTVTLPPTGNVTRETTIAVVTTTKSLPSDQVTLVYDQQEVEAIFLIILVVVIIGEFFSASSVTIVDTVTLQYLGKHRDRYGLQRMWGSLGWGLAMLSVGIGIDYTHIDVLIDGKGCKPPEYRNYQIVFIVFGVLMTMALIVATQFRFRYNHFNNSDGKGKEVEIPQVERDNSTESSEETPTAATHSQAFNFWDLIKLLCSVQYGSVLFVAWFMGFGYGFVFTFLYWHLEDLNGTTTLFGVCSVLSHVSELTAYFFSHKLIELIGHIRVLYIGLACNTARYIYISYLENAWTVLPMEVLQGVTHAAIWAACISYLSAAVPPELRTSAQGILQGLHLGLGRGCGAMIGGVLVNYFGAAATFRGIGMACLVILLLFALIQWLAVPDEEEDKTMLAERIPVPSSPVPIATIDLVQQQTEDVMPRVEARLPPKKTKHQEEQEDVNKPAWGVSSSPWVTFVYALYQVKELIQLTRESRASEIQPLQVTLCWASVASAPLLPPCSSKHMGNRKTGMLAKDISGLRSLCHSVYQVA.

The residue at position 11 (Thr11) is a Phosphothreonine. The segment at 28–47 (NGICREPEPPSNETPSSTET) is disordered. Over residues 38 to 47 (SNETPSSTET) the composition is skewed to low complexity. Helical transmembrane passes span 74–94 (VFYFFFYSAYGSLYPLLPVYY), 106–126 (LLVGIRYFIEFCSAPFWGVVA), 133–153 (KIVLLFSLLCWVLFNLGIGFV), 289–309 (AIFLIILVVVIIGEFFSASSV), 338–358 (WGLAMLSVGIGIDYTHIDVLI), 372–392 (QIVFIVFGVLMTMALIVATQF), 453–473 (VLFVAWFMGFGYGFVFTFLYW), 482–502 (TTLFGVCSVLSHVSELTAYFF), 510–530 (IGHIRVLYIGLACNTARYIYI), 547–567 (GVTHAAIWAACISYLSAAVPP), 582–602 (LGLGRGCGAMIGGVLVNYFGA), and 608–628 (GIGMACLVILLLFALIQWLAV).

The protein belongs to the major facilitator superfamily. MFSD6 family.

It is found in the membrane. In terms of biological role, MHC class I receptor. Binds only to H-2 class I histocompatibility antigen, K-D alpha chain (H-2K(D)). In Mus musculus (Mouse), this protein is Major facilitator superfamily domain-containing protein 6 (Mfsd6).